The primary structure comprises 113 residues: Probable 4-amino-4-deoxy-L-arabinose-phosphoundecaprenol flippase subunit ArnE (113 aa).

The next 3 membrane-spanning stretches (helical) occupy residues 37–57 (SALK…LFWL), 62–82 (ILPL…VTLA), and 91–111 (AGIK…LMSL). An EamA domain is found at 45–111 (AVILLAVGML…IMLGILLMSL (67 aa)).

The protein belongs to the ArnE family. Heterodimer of ArnE and ArnF.

The protein localises to the cell inner membrane. The protein operates within bacterial outer membrane biogenesis; lipopolysaccharide biosynthesis. In terms of biological role, translocates 4-amino-4-deoxy-L-arabinose-phosphoundecaprenol (alpha-L-Ara4N-phosphoundecaprenol) from the cytoplasmic to the periplasmic side of the inner membrane. The sequence is that of Probable 4-amino-4-deoxy-L-arabinose-phosphoundecaprenol flippase subunit ArnE from Photorhabdus laumondii subsp. laumondii (strain DSM 15139 / CIP 105565 / TT01) (Photorhabdus luminescens subsp. laumondii).